The chain runs to 170 residues: Methanogen homoaconitase small subunit (170 aa).

Positions 26-29 match the YLRT motif; it reads YLRT.

It belongs to the LeuD family. LeuD type 2 subfamily. Heterotetramer of 2 HacA and 2 HacB proteins.

The enzyme catalyses (2R)-homocitrate = (2R,3S)-homoisocitrate. It carries out the reaction (2R)-homocitrate = cis-homoaconitate + H2O. It catalyses the reaction (2R,3S)-homoisocitrate = cis-homoaconitate + H2O. The catalysed reaction is cis-(homo)2aconitate + H2O = (2R,3S)-iso(homo)2citrate. The enzyme catalyses cis-(homo)3aconitate + H2O = (2R,3S)-iso(homo)3citrate. Its pathway is organic acid metabolism; 2-oxosuberate biosynthesis. Its function is as follows. Component of a hydro-lyase with broad substrate specificity for cis-unsaturated tricarboxylic acids. Catalyzes both the reversible dehydration of (R)-homocitrate ((R)-2-hydroxybutane-1,2,4-tricarboxylate) to produce cis-homoaconitate ((Z)-but-1-ene-1,2,4-tricarboxylate), and its hydration to homoisocitrate ((1R,2S)-1-hydroxybutane-1,2,4-tricarboxylate). Is also able to hydrate the analogous longer chain substrates cis-homo(2)-aconitate, cis-homo(3)-aconitate. These reactions are part of the biosynthesis pathway of coenzyme B. The chain is Methanogen homoaconitase small subunit (hacB) from Methanothermobacter thermautotrophicus (strain ATCC 29096 / DSM 1053 / JCM 10044 / NBRC 100330 / Delta H) (Methanobacterium thermoautotrophicum).